Here is a 335-residue protein sequence, read N- to C-terminus: Thioredoxin-related transmembrane protein 4 (335 aa).

The signal sequence occupies residues 1-20 (MTGGFCVPVLLAAWLAAAAA). The Thioredoxin domain occupies 26–133 (AALPAEESRV…YEDLQNYILE (108 aa)). Residues Cys-60 and Cys-63 each act as nucleophile in the active site. Cys-60 and Cys-63 are joined by a disulfide. A helical transmembrane segment spans residues 186 to 206 (VFFVIATLVFGLFMGLILVVI). Positions 222 to 316 (CEQEQSTGEA…EDGAHPADTQ (95 aa)) are disordered. Positions 238 to 280 (QDAEEEKDDSNEEENKDSLVDDEEEKEDIGDEDEGEEDEEEDN) are enriched in acidic residues. 2 positions are modified to phosphoserine: Ser-247 and Ser-255. The segment covering 286–298 (AEERSDTNERAVV) has biased composition (basic and acidic residues).

The protein localises to the nucleus inner membrane. The protein resides in the endoplasmic reticulum membrane. The polypeptide is Thioredoxin-related transmembrane protein 4 (Tmx4) (Mus musculus (Mouse)).